A 115-amino-acid chain; its full sequence is MDTRLLCCAVICLLGAGLSNAGVMQNPRHLVRRRGQEARLRCSPMKGHSHVYWYRQLPEEGLKFMVYLQKENIIDESGMPKERFSAEFPKEGPSILRIQQVVRGDSAAYFCASSP.

A signal peptide spans 1 to 21 (MDTRLLCCAVICLLGAGLSNA). The region spanning 22 to 115 (GVMQNPRHLV…SAAYFCASSP (94 aa)) is the Ig-like domain. Cysteine 42 and cysteine 111 are disulfide-bonded.

As to quaternary structure, alpha-beta TR is a heterodimer composed of an alpha and beta chain; disulfide-linked. The alpha-beta TR is associated with the transmembrane signaling CD3 coreceptor proteins to form the TR-CD3 (TcR or TCR). The assembly of alpha-beta TR heterodimers with CD3 occurs in the endoplasmic reticulum where a single alpha-beta TR heterodimer associates with one CD3D-CD3E heterodimer, one CD3G-CD3E heterodimer and one CD247 homodimer forming a stable octameric structure. CD3D-CD3E and CD3G-CD3E heterodimers preferentially associate with TR alpha and TR beta chains, respectively. The association of the CD247 homodimer is the last step of TcR assembly in the endoplasmic reticulum and is required for transport to the cell surface.

It localises to the cell membrane. Its function is as follows. V region of the variable domain of T cell receptor (TR) beta chain that participates in the antigen recognition. Alpha-beta T cell receptors are antigen specific receptors which are essential to the immune response and are present on the cell surface of T lymphocytes. Recognize peptide-major histocompatibility (MH) (pMH) complexes that are displayed by antigen presenting cells (APC), a prerequisite for efficient T cell adaptive immunity against pathogens. Binding of alpha-beta TR to pMH complex initiates TR-CD3 clustering on the cell surface and intracellular activation of LCK that phosphorylates the ITAM motifs of CD3G, CD3D, CD3E and CD247 enabling the recruitment of ZAP70. In turn ZAP70 phosphorylates LAT, which recruits numerous signaling molecules to form the LAT signalosome. The LAT signalosome propagates signal branching to three major signaling pathways, the calcium, the mitogen-activated protein kinase (MAPK) kinase and the nuclear factor NF-kappa-B (NF-kB) pathways, leading to the mobilization of transcription factors that are critical for gene expression and essential for T cell growth and differentiation. The T cell repertoire is generated in the thymus, by V-(D)-J rearrangement. This repertoire is then shaped by intrathymic selection events to generate a peripheral T cell pool of self-MH restricted, non-autoaggressive T cells. Post-thymic interaction of alpha-beta TR with the pMH complexes shapes TR structural and functional avidity. The sequence is that of T cell receptor beta variable 18 from Homo sapiens (Human).